We begin with the raw amino-acid sequence, 70 residues long: UPF0352 protein PBPRA2586 (70 aa).

It belongs to the UPF0352 family.

This chain is UPF0352 protein PBPRA2586, found in Photobacterium profundum (strain SS9).